A 1305-amino-acid polypeptide reads, in one-letter code: Myosin-IIIb (1305 aa).

The Protein kinase domain occupies 15–281 (WEIIETIGKG…VTHLLDHPFI (267 aa)). Residues 21–29 (IGKGTYGKV) and Lys44 each bind ATP. Asp144 serves as the catalytic Proton acceptor. Residues 331–1046 (CLEDDLVNLE…HVEQLNLLLR (716 aa)) form the Myosin motor domain. The actin-binding stretch occupies residues 927 to 949 (LMDLLSKMVVGQPHFIRCIKPND). 2 consecutive IQ domains span residues 1048 to 1077 (VMGRVVMLQAYTKGWLGARRYKRAKEKREK) and 1075 to 1104 (REKGAITIQSAWRGYDARRKLKQRSRRRSE). Disordered stretches follow at residues 1093 to 1164 (RKLK…VTSG) and 1200 to 1233 (SPCEDSLKPGSEEGLSQKQRAPRRRCQQPKMLSS).

In the C-terminal section; belongs to the TRAFAC class myosin-kinesin ATPase superfamily. Myosin family. The protein in the N-terminal section; belongs to the protein kinase superfamily. STE Ser/Thr protein kinase family. Interacts (via C-terminus) with ESPN. Interacts (via C-terminus) with ESPNL. In terms of tissue distribution, expressed in the cochlear hair cells (at protein level). Expressed in utricle hair bundles (at protein level).

The protein resides in the cytoplasm. Its subcellular location is the cytoskeleton. It localises to the cell projection. It is found in the stereocilium. It carries out the reaction L-seryl-[protein] + ATP = O-phospho-L-seryl-[protein] + ADP + H(+). The catalysed reaction is L-threonyl-[protein] + ATP = O-phospho-L-threonyl-[protein] + ADP + H(+). Its function is as follows. Probable actin-based motor with a protein kinase activity. Required for normal cochlear hair bundle development and hearing. Plays an important role in the early steps of cochlear hair bundle morphogenesis. Influences the number and lengths of stereocilia to be produced and limits the growth of microvilli within the forming auditory hair bundles thereby contributing to the architecture of the hair bundle, including its staircase pattern. Involved in the elongation of actin in stereocilia tips by transporting the actin regulatory factor ESPN to the plus ends of actin filaments. This Mus musculus (Mouse) protein is Myosin-IIIb (Myo3b).